Reading from the N-terminus, the 167-residue chain is NADH-quinone oxidoreductase subunit I (167 aa).

2 consecutive 4Fe-4S ferredoxin-type domains span residues 59 to 88 (RKYK…IEAQ) and 98 to 127 (VRYD…EGPN). [4Fe-4S] cluster is bound by residues Cys-68, Cys-71, Cys-74, Cys-78, Cys-107, Cys-110, Cys-113, and Cys-117.

This sequence belongs to the complex I 23 kDa subunit family. In terms of assembly, NDH-1 is composed of 14 different subunits. Subunits NuoA, H, J, K, L, M, N constitute the membrane sector of the complex. [4Fe-4S] cluster serves as cofactor.

It is found in the cell inner membrane. It carries out the reaction a quinone + NADH + 5 H(+)(in) = a quinol + NAD(+) + 4 H(+)(out). In terms of biological role, NDH-1 shuttles electrons from NADH, via FMN and iron-sulfur (Fe-S) centers, to quinones in the respiratory chain. The immediate electron acceptor for the enzyme in this species is believed to be ubiquinone. Couples the redox reaction to proton translocation (for every two electrons transferred, four hydrogen ions are translocated across the cytoplasmic membrane), and thus conserves the redox energy in a proton gradient. This is NADH-quinone oxidoreductase subunit I from Ehrlichia canis (strain Jake).